We begin with the raw amino-acid sequence, 53 residues long: Small, acid-soluble spore protein K (53 aa).

Residues 1–53 form a disordered region; it reads MRNKEHNFPNQNNNKFEGEPRAKSEYASKRADGTTNTHPQERMRASGERSDFF. Composition is skewed to basic and acidic residues over residues 16 to 32 and 39 to 53; these read FEGEPRAKSEYASKRAD and PQERMRASGERSDFF.

The protein belongs to the SspK family.

It is found in the spore core. This is Small, acid-soluble spore protein K from Geobacillus thermodenitrificans (strain NG80-2).